Consider the following 239-residue polypeptide: Fatty acid metabolism regulator protein (239 aa).

Positions 6 to 74 constitute an HTH gntR-type domain; the sequence is QSPAGFAEEY…HGKPTKVNNF (69 aa). Residues 34-53 constitute a DNA-binding region (H-T-H motif); sequence ERELSELIGVTRTTLREVLQ.

In terms of assembly, homodimer.

The protein localises to the cytoplasm. Multifunctional regulator of fatty acid metabolism. This chain is Fatty acid metabolism regulator protein, found in Yersinia enterocolitica serotype O:8 / biotype 1B (strain NCTC 13174 / 8081).